Consider the following 392-residue polypeptide: MSKKALLALEDGSFFFGQSLGAEGETFGELVFNTGMTGYQEVLTDPSYTGQIVVMTYPEIGIYGVNDEDVESDGIKVAGFVVYRSVDTPSNWRATMSFPDYLKKYNIVAIEGVDTRALTRKIRVKGAMKGAISTVDLDPDSLVKRVKESPSIVGRDLAGLVSPKEVIVENPEGDFSVVVLDSGVKWGILRDLKRVGAKVMRVPYSVDIDDIKKLNPDGVLISNGPGDPAALLKTIRLIKDLLKEEIPLAGICLGHQLLGLAVGGRTYKMKFGHRGINHPVKDLRTGRVLITTHNHGFAVDPKSFGLPELGSEDQDANVLTKNLQKISVLEGISPQGIKVEITHISLNDGTMEGMRLVDYPAFSVQYHPEASPGPHDAKYFFEEFKRLIKEVR.

Positions 1 to 174 (MSKKALLALE…EVIVENPEGD (174 aa)) are CPSase. Residues Ser47, Gly224, and Gly226 each coordinate L-glutamine. A Glutamine amidotransferase type-1 domain is found at 176–392 (SVVVLDSGVK…EFKRLIKEVR (217 aa)). The active-site Nucleophile is Cys252. Leu253, Gln256, Asn294, Gly296, and Phe297 together coordinate L-glutamine. Catalysis depends on residues His367 and Glu369.

This sequence belongs to the CarA family. In terms of assembly, composed of two chains; the small (or glutamine) chain promotes the hydrolysis of glutamine to ammonia, which is used by the large (or ammonia) chain to synthesize carbamoyl phosphate. Tetramer of heterodimers (alpha,beta)4.

It carries out the reaction hydrogencarbonate + L-glutamine + 2 ATP + H2O = carbamoyl phosphate + L-glutamate + 2 ADP + phosphate + 2 H(+). The catalysed reaction is L-glutamine + H2O = L-glutamate + NH4(+). The protein operates within amino-acid biosynthesis; L-arginine biosynthesis; carbamoyl phosphate from bicarbonate: step 1/1. It participates in pyrimidine metabolism; UMP biosynthesis via de novo pathway; (S)-dihydroorotate from bicarbonate: step 1/3. Functionally, small subunit of the glutamine-dependent carbamoyl phosphate synthetase (CPSase). CPSase catalyzes the formation of carbamoyl phosphate from the ammonia moiety of glutamine, carbonate, and phosphate donated by ATP, constituting the first step of 2 biosynthetic pathways, one leading to arginine and/or urea and the other to pyrimidine nucleotides. The small subunit (glutamine amidotransferase) binds and cleaves glutamine to supply the large subunit with the substrate ammonia. This chain is Carbamoyl phosphate synthase small chain, found in Thermotoga maritima (strain ATCC 43589 / DSM 3109 / JCM 10099 / NBRC 100826 / MSB8).